The following is a 781-amino-acid chain: MHDECTPQQTMSSIQDTKAADIAARGELNVIETATVSPTNGEESHYTNQVQLEKNKTHMSSALVEKENNTSLNGRVLGQEESQNKMFPDNAENEDDKQIEHMTVENINGNREETHGIIQTTETEIQETSESPREEMTTSSIICDISKKYINSTLPNDSENIKHKNNIMEKEYLDVLSDVTGPQVSCYITAPSYVLQQLECRIINHMSSLIVGDNEELVSNVITIECSDKEKRVPFPIGIAIPFTARYRGNYRDIMVKVCDINLQSSYLNPNSLEGMKGGYKGTCASVKVYKLGIFSVVSCLKKESFTVTKKGLALKSSMDSRISLNYPPGVFTSPVLVQLKIQPVDPALVAHLKAQQDTFYSVQSTSPLIHIQHPSTYPFQKPVTLFLPCSPYLDKNNLGSEIDHKRRASATINRITPSYFNRTKIASIRKPRKNASECLKLLGFRSQDSGWCGLDDVVKTIQSGLVSVELYEHLERFIVLHLSSTMDNSHLVTFVKSLEEAMLSTTACIVLSHQKDNPHRIAVLVVPSKDLSQVLKDLHLEGFGGPPEPSRHFQVREGEQLLLRFTGNIFASSNGKDYGKDYTLIFHLQRKPRLELQIKEVDEFGNYSCPHYKGTIVVYKVPKGKIVPNLNQSLVINENHSQLPICKLPLKLPKHKKLINRPQSTKRVSKDPVEALWDNLLHWLAEELSEENAESLSSTLPLRRSTIQLIKLKNPDDLTEQIHEFLCFWKKSLPTFTDKLRLLARHLRKIGRSDLAEELKFKWENKVFTEPQQCFDVAPE.

ZU5 domains are found at residues 167–301 (IMEK…VSCL) and 302–483 (KKES…VLHL). One can recognise a Death domain in the interval 679–764 (DNLLHWLAEE…DLAEELKFKW (86 aa)).

This Homo sapiens (Human) protein is Death domain-containing protein 1 (DTHD1).